We begin with the raw amino-acid sequence, 603 residues long: Linalool synthase Tps-5031L19, chloroplastic (603 aa).

A chloroplast-targeting transit peptide spans 1-36; sequence MSSMRTYVAIMKKPSVEHVDNVDKKASKPSWRVSLS. (2E)-geranyl diphosphate-binding residues include Arg-322, Asp-359, Asp-363, Arg-500, and Asp-503. Residues Asp-359 and Asp-363 each contribute to the Mg(2+) site. Positions 359-363 match the DDXXD motif motif; it reads DDVYD. Positions 503, 507, and 511 each coordinate Mg(2+).

Belongs to the terpene synthase family. Tpsb subfamily. As to quaternary structure, monomer. Mg(2+) is required as a cofactor. It depends on Mn(2+) as a cofactor.

The protein localises to the plastid. It is found in the chloroplast. It carries out the reaction (2E)-geranyl diphosphate + H2O = linalool + diphosphate. It participates in secondary metabolite biosynthesis; terpenoid biosynthesis. Functionally, monoterpene synthase (mono-TPS) involved in the biosynthesis of monoterpenes natural products. Catalyzes the conversion of (2E)-geranyl diphosphate (GPP) into linalool. This Perilla frutescens var. hirtella (Perilla citriodora) protein is Linalool synthase Tps-5031L19, chloroplastic.